A 439-amino-acid polypeptide reads, in one-letter code: Tol-Pal system protein TolB (439 aa).

The signal sequence occupies residues 1-21; that stretch reads MRFRLALSLLSLALFAAPAAA.

Belongs to the TolB family. The Tol-Pal system is composed of five core proteins: the inner membrane proteins TolA, TolQ and TolR, the periplasmic protein TolB and the outer membrane protein Pal. They form a network linking the inner and outer membranes and the peptidoglycan layer.

It localises to the periplasm. In terms of biological role, part of the Tol-Pal system, which plays a role in outer membrane invagination during cell division and is important for maintaining outer membrane integrity. The chain is Tol-Pal system protein TolB from Rhizorhabdus wittichii (strain DSM 6014 / CCUG 31198 / JCM 15750 / NBRC 105917 / EY 4224 / RW1) (Sphingomonas wittichii).